Reading from the N-terminus, the 126-residue chain is Small ribosomal subunit protein uS12 (126 aa).

The interval 1 to 26 (MPTINQLVRKGRASETTKSKSPALQD) is disordered. At Asp89 the chain carries 3-methylthioaspartic acid. The tract at residues 101-126 (SLDTQGVKDRKQARSKYGAKRAKAAK) is disordered. Residues 113–126 (ARSKYGAKRAKAAK) are compositionally biased toward basic residues.

Belongs to the universal ribosomal protein uS12 family. Part of the 30S ribosomal subunit. Contacts proteins S8 and S17. May interact with IF1 in the 30S initiation complex.

Its function is as follows. With S4 and S5 plays an important role in translational accuracy. Interacts with and stabilizes bases of the 16S rRNA that are involved in tRNA selection in the A site and with the mRNA backbone. Located at the interface of the 30S and 50S subunits, it traverses the body of the 30S subunit contacting proteins on the other side and probably holding the rRNA structure together. The combined cluster of proteins S8, S12 and S17 appears to hold together the shoulder and platform of the 30S subunit. This is Small ribosomal subunit protein uS12 from Burkholderia pseudomallei (strain 1106a).